The chain runs to 537 residues: Glutamate--tRNA ligase (537 aa).

The 'HIGH' region motif lies at 9 to 19 (PSPTGLQHIGG). Residues Cys125, Cys127, Cys152, and Glu154 each coordinate Zn(2+). Residues 270 to 274 (KLSKR) carry the 'KMSKS' region motif. An ATP-binding site is contributed by Lys273.

This sequence belongs to the class-I aminoacyl-tRNA synthetase family. Glutamate--tRNA ligase type 1 subfamily. In terms of assembly, monomer. Requires Zn(2+) as cofactor.

The protein resides in the cytoplasm. The enzyme catalyses tRNA(Glu) + L-glutamate + ATP = L-glutamyl-tRNA(Glu) + AMP + diphosphate. Functionally, catalyzes the attachment of glutamate to tRNA(Glu) in a two-step reaction: glutamate is first activated by ATP to form Glu-AMP and then transferred to the acceptor end of tRNA(Glu). The protein is Glutamate--tRNA ligase of Treponema pallidum (strain Nichols).